Reading from the N-terminus, the 236-residue chain is tRNA (guanine-N(1)-)-methyltransferase (236 aa).

S-adenosyl-L-methionine-binding positions include G114 and 134–139 (IGDYIL).

The protein belongs to the RNA methyltransferase TrmD family. As to quaternary structure, homodimer.

It is found in the cytoplasm. The enzyme catalyses guanosine(37) in tRNA + S-adenosyl-L-methionine = N(1)-methylguanosine(37) in tRNA + S-adenosyl-L-homocysteine + H(+). Functionally, specifically methylates guanosine-37 in various tRNAs. The polypeptide is tRNA (guanine-N(1)-)-methyltransferase (Wolbachia pipientis wMel).